The primary structure comprises 405 residues: Phosphatidylinositol 5-phosphate 4-kinase type-2 alpha (405 aa).

In terms of domain architecture, PIPK spans 32-404 (ASDPLLSVLM…RFLDFIANIL (373 aa)). The disordered stretch occupies residues 287 to 326 (QEEVECEENDGEDEGESDGTHPIGTPPDSPGNTLNSSLPL). The span at 288 to 303 (EEVECEENDGEDEGES) shows a compositional bias: acidic residues.

Homodimer. Post-translationally, phosphorylated in tyrosines. Phosphorylation is induced by light and increases kinase activity.

The protein localises to the cell membrane. The protein resides in the nucleus. It localises to the lysosome. Its subcellular location is the cytoplasm. It carries out the reaction a 1,2-diacyl-sn-glycero-3-phospho-(1D-myo-inositol-5-phosphate) + ATP = a 1,2-diacyl-sn-glycero-3-phospho-(1D-myo-inositol-4,5-bisphosphate) + ADP + H(+). The catalysed reaction is 1,2-dihexadecanoyl-sn-glycero-3-phospho-(1D-myo-inositol-5-phosphate) + ATP = 1,2-dihexadecanoyl-sn-glycero-3-phospho-(1D-myo-inositol-4,5-bisphosphate) + ADP + H(+). The enzyme catalyses 1,2-dihexadecanoyl-sn-glycero-3-phospho-(1D-myo-inositol-5-phosphate) + GTP = 1,2-dihexadecanoyl-sn-glycero-3-phospho-(1D-myo-inositol-4,5-bisphosphate) + GDP + H(+). Its activity is regulated as follows. In rod outer segments, activated by light. Its function is as follows. Catalyzes the phosphorylation of phosphatidylinositol 5-phosphate (PtdIns5P) on the fourth hydroxyl of the myo-inositol ring, to form phosphatidylinositol 4,5-bisphosphate (PtdIns(4,5)P2). Has both ATP- and GTP-dependent kinase activities. The chain is Phosphatidylinositol 5-phosphate 4-kinase type-2 alpha (PIP4K2A) from Gallus gallus (Chicken).